Here is a 448-residue protein sequence, read N- to C-terminus: Exodeoxyribonuclease 7 large subunit (448 aa).

It belongs to the XseA family. As to quaternary structure, heterooligomer composed of large and small subunits.

The protein resides in the cytoplasm. The catalysed reaction is Exonucleolytic cleavage in either 5'- to 3'- or 3'- to 5'-direction to yield nucleoside 5'-phosphates.. Functionally, bidirectionally degrades single-stranded DNA into large acid-insoluble oligonucleotides, which are then degraded further into small acid-soluble oligonucleotides. In Shewanella baltica (strain OS223), this protein is Exodeoxyribonuclease 7 large subunit.